We begin with the raw amino-acid sequence, 185 residues long: Virulence membrane protein PagC (185 aa).

Positions 1–23 (MKNIILSTLVITTSVLVVNVAQA) are cleaved as a signal peptide.

It belongs to the outer membrane OOP (TC 1.B.6) superfamily. Ail family.

It localises to the cell outer membrane. Functionally, essential for full virulence and survival within macrophages. The polypeptide is Virulence membrane protein PagC (pagC) (Salmonella typhimurium (strain LT2 / SGSC1412 / ATCC 700720)).